We begin with the raw amino-acid sequence, 546 residues long: Cysteine desulfurase SufS (546 aa).

The N-terminal stretch at 1 to 22 (MLRGPRCLYIYLFFVFLPFSFC) is a signal peptide. N6-(pyridoxal phosphate)lysine is present on Lys-291. Residue Cys-497 is the Cysteine persulfide intermediate of the active site.

Belongs to the class-V pyridoxal-phosphate-dependent aminotransferase family. Csd subfamily. As to quaternary structure, monomer. Interacts with SufE; interaction enhances cysteine desulfurase activity of SufS. The cofactor is pyridoxal 5'-phosphate. Post-translationally, proteolytically cleaved.

The protein resides in the plastid. Its subcellular location is the apicoplast. The enzyme catalyses (sulfur carrier)-H + L-cysteine = (sulfur carrier)-SH + L-alanine. Its pathway is cofactor biosynthesis; iron-sulfur cluster biosynthesis. Its function is as follows. Catalyzes sulfur activation and mobilization in sulfur mobilization (SUF) pathway for iron-sulfur (Fe-S) cluster biogenesis. Active when in complex with a partner protein SufE. Required for apicoplast maintenance. Plays a role in the development of sporozoites in oocysts in mosquitoes. May provide sulfur for MNMA-mediated tRNA modifications. The polypeptide is Cysteine desulfurase SufS (Plasmodium falciparum (isolate 3D7)).